The chain runs to 289 residues: 2-hydroxy-6-oxononadienedioate/2-hydroxy-6-oxononatrienedioate hydrolase 1 (289 aa).

An AB hydrolase-1 domain is found at 39-275; that stretch reads TVVMLHGSGP…RCGHWAQWEH (237 aa). The active-site Proton acceptor is His-269.

Belongs to the AB hydrolase superfamily. MhpC family. In terms of assembly, homodimer.

The enzyme catalyses (2Z,4E)-2-hydroxy-6-oxonona-2,4-dienedioate + H2O = (2Z)-2-hydroxypenta-2,4-dienoate + succinate + H(+). It catalyses the reaction (2Z,4E,7E)-2-hydroxy-6-oxonona-2,4,7-trienedioate + H2O = (2Z)-2-hydroxypenta-2,4-dienoate + fumarate + H(+). The protein operates within aromatic compound metabolism; 3-phenylpropanoate degradation. Catalyzes the cleavage of the C5-C6 bond of 2-hydroxy-6-oxononadienedioate and 2-hydroxy-6-oxononatrienedioate, a dienol ring fission product of the bacterial meta-cleavage pathway for degradation of phenylpropionic acid. This Dechloromonas aromatica (strain RCB) protein is 2-hydroxy-6-oxononadienedioate/2-hydroxy-6-oxononatrienedioate hydrolase 1.